Consider the following 127-residue polypeptide: Protein ApaG (127 aa).

In terms of domain architecture, ApaG spans 3–127 (ESEKYRIEVE…FMLAMPRVLH (125 aa)).

The polypeptide is Protein ApaG (Aromatoleum aromaticum (strain DSM 19018 / LMG 30748 / EbN1) (Azoarcus sp. (strain EbN1))).